A 191-amino-acid chain; its full sequence is Cathelicidin-related antimicrobial peptide Na_CRAMP (191 aa).

Positions 1–22 (MEGFFWKTLLVVGALTISGTSS) are cleaved as a signal peptide. A propeptide spanning residues 23-161 (FPHKPLTYEE…DQPKRVKRFK (139 aa)) is cleaved from the precursor. 2 cysteine pairs are disulfide-bonded: cysteine 81/cysteine 92 and cysteine 103/cysteine 120. The segment at 126-154 (EEEQKQEEGNEEEKEVEKEEKEEDQKDQP) is disordered. Over residues 140–154 (EVEKEEKEEDQKDQP) the composition is skewed to basic and acidic residues.

The protein belongs to the cathelicidin family. As to expression, expressed by the venom gland.

The protein resides in the secreted. It is found in the target cell membrane. Its function is as follows. Potent antimicrobial peptide against most of Gram-negative bacteria, some Gram-positive bacteria (Bacillus) and some fungi. Adopts an amphipathic alpha helical conformation, that may allow to partition into the target membrane. No hemolytic and cytotoxic activities have been observed on mammalian cells. The chain is Cathelicidin-related antimicrobial peptide Na_CRAMP from Naja atra (Chinese cobra).